The following is a 317-amino-acid chain: Ornithine carbamoyltransferase (317 aa).

Residues 57-60 (STRT), Gln84, Arg108, and 135-138 (HPCQ) contribute to the carbamoyl phosphate site. L-ornithine-binding positions include Asn166, Asp230, and 234–235 (SM). Carbamoyl phosphate is bound by residues 270–271 (CL) and Arg298.

Belongs to the aspartate/ornithine carbamoyltransferase superfamily. OTCase family. In terms of assembly, homododecamer.

Its subcellular location is the cytoplasm. The enzyme catalyses carbamoyl phosphate + L-ornithine = L-citrulline + phosphate + H(+). It participates in amino-acid biosynthesis; L-arginine biosynthesis; L-arginine from L-ornithine and carbamoyl phosphate: step 1/3. In terms of biological role, reversibly catalyzes the transfer of the carbamoyl group from carbamoyl phosphate (CP) to the N(epsilon) atom of ornithine (ORN) to produce L-citrulline. The protein is Ornithine carbamoyltransferase of Pyrococcus horikoshii (strain ATCC 700860 / DSM 12428 / JCM 9974 / NBRC 100139 / OT-3).